The chain runs to 959 residues: Translation initiation factor IF-2 (959 aa).

Positions M1–T10 are enriched in basic and acidic residues. A disordered region spans residues M1–I374. The span at E27–H37 shows a compositional bias: polar residues. 2 stretches are compositionally biased toward low complexity: residues A63–P118 and Q128–P138. Composition is skewed to basic and acidic residues over residues S154–K225 and A232–R241. Low complexity predominate over residues G246–A284. Basic and acidic residues predominate over residues P318–R333. A tr-type G domain is found at S457 to K626. The G1 stretch occupies residues G466–T473. G466 to T473 lines the GTP pocket. A G2 region spans residues G491 to H495. A G3 region spans residues D512 to G515. GTP-binding positions include D512 to H516 and N566 to D569. The G4 stretch occupies residues N566–D569. The tract at residues S602 to K604 is G5.

The protein belongs to the TRAFAC class translation factor GTPase superfamily. Classic translation factor GTPase family. IF-2 subfamily.

The protein localises to the cytoplasm. Its function is as follows. One of the essential components for the initiation of protein synthesis. Protects formylmethionyl-tRNA from spontaneous hydrolysis and promotes its binding to the 30S ribosomal subunits. Also involved in the hydrolysis of GTP during the formation of the 70S ribosomal complex. This chain is Translation initiation factor IF-2, found in Brucella abortus (strain 2308).